The chain runs to 945 residues: Bifunctional glutamine synthetase adenylyltransferase/adenylyl-removing enzyme (945 aa).

The interval 1-441 is adenylyl removase; that stretch reads MLPLSAALQT…VFNDLIGDDS (441 aa). The segment at 450–945 is adenylyl transferase; it reads YQHYHSLWQD…VRASWAKWLG (496 aa).

The protein belongs to the GlnE family. Requires Mg(2+) as cofactor.

It catalyses the reaction [glutamine synthetase]-O(4)-(5'-adenylyl)-L-tyrosine + phosphate = [glutamine synthetase]-L-tyrosine + ADP. It carries out the reaction [glutamine synthetase]-L-tyrosine + ATP = [glutamine synthetase]-O(4)-(5'-adenylyl)-L-tyrosine + diphosphate. Its function is as follows. Involved in the regulation of glutamine synthetase GlnA, a key enzyme in the process to assimilate ammonia. When cellular nitrogen levels are high, the C-terminal adenylyl transferase (AT) inactivates GlnA by covalent transfer of an adenylyl group from ATP to specific tyrosine residue of GlnA, thus reducing its activity. Conversely, when nitrogen levels are low, the N-terminal adenylyl removase (AR) activates GlnA by removing the adenylyl group by phosphorolysis, increasing its activity. The regulatory region of GlnE binds the signal transduction protein PII (GlnB) which indicates the nitrogen status of the cell. The chain is Bifunctional glutamine synthetase adenylyltransferase/adenylyl-removing enzyme from Serratia proteamaculans (strain 568).